The sequence spans 434 residues: MSNSLEERLRANSSAFDGLLALIPAKYYYDEKSQEQWKAKKKTKEQSKNDKLKKLDPEQRDDETSSTLEVMKKKEKDAKPVVLPGEKFKHMKMQKQKEATSKVEGDSDLNVEVNDPMIIAPDEDEEEEEDIKVIFDDEGNEIPLESKKDTTEPDRSVEKKSITEEEKLQRKKNLEALRSKLQAKISDMKSKRKAPGSREAILAQRKRKEELKKRKRLESEQEQDQDEIASDSDMEDIDSDLENNSKKRFKKGKKDSEINADGVMFQNIIFDDGARATSDLQRLRKAGRTKGPAKNDVKSHLKLLEAKKNKMEAKDELEQIKQKEKEKWQKAMLQAEGIKIRDDEKLLRKAIKRKEAQKRKSAIEWSERKRVVEDTISERQKRREENLRIRKDNKGKKRNKQEKMKRKYVGSAVPKKRAGFEGRLKTGKKKGGPK.

S2 carries the N-acetylserine modification. Composition is skewed to basic and acidic residues over residues 32-58, 70-79, and 95-105; these read KSQEQWKAKKKTKEQSKNDKLKKLDPE, VMKKKEKDAK, and KQKEATSKVEG. Residues 32-257 form a disordered region; it reads KSQEQWKAKK…RFKKGKKDSE (226 aa). Residues 121–140 are compositionally biased toward acidic residues; it reads PDEDEEEEEDIKVIFDDEGN. Basic and acidic residues predominate over residues 144-178; the sequence is LESKKDTTEPDRSVEKKSITEEEKLQRKKNLEALR. 2 coiled-coil regions span residues 162–230 and 293–360; these read ITEE…EIAS and AKND…QKRK. The segment covering 220–241 has biased composition (acidic residues); the sequence is EQEQDQDEIASDSDMEDIDSDL. Over residues 375 to 392 the composition is skewed to basic and acidic residues; that stretch reads TISERQKRREENLRIRKD. The segment at 375-434 is disordered; it reads TISERQKRREENLRIRKDNKGKKRNKQEKMKRKYVGSAVPKKRAGFEGRLKTGKKKGGPK. 2 stretches are compositionally biased toward basic residues: residues 393-408 and 425-434; these read NKGKKRNKQEKMKRKY and KTGKKKGGPK.

This sequence belongs to the SURF6 family. As to quaternary structure, component of the 90S and 60S pre-ribosomal particles.

Its subcellular location is the nucleus. It localises to the nucleolus. Functionally, involved in ribosome biogenesis and cell polarity. Required for the synthesis of both 40S and 60S ribosomal subunits and may also play some direct role in correct positioning of the mitotic spindle during mitosis. This chain is Ribosomal RNA-processing protein 14 (RRP14), found in Saccharomyces cerevisiae (strain ATCC 204508 / S288c) (Baker's yeast).